We begin with the raw amino-acid sequence, 620 residues long: Protein AFR1 (620 aa).

The segment covering 1–12 (MEGSYLSAQENQ) has biased composition (polar residues). The segment at 1 to 20 (MEGSYLSAQENQPIPERLIP) is disordered. Serine 472 and serine 526 each carry phosphoserine.

This sequence to yeast YER158C.

Acts in conjunction with the alpha-factor receptor to promote morphogenesis and adaptation. In Saccharomyces cerevisiae (strain ATCC 204508 / S288c) (Baker's yeast), this protein is Protein AFR1 (AFR1).